A 556-amino-acid chain; its full sequence is Guard cell S-type anion channel SLAC1 (556 aa).

The segment at 1 to 103 (MERKQSNAHS…GIINGGDGRK (103 aa)) is disordered. The Cytoplasmic segment spans residues 1–189 (MERKQSNAHS…EQWPFLLRFP (189 aa)). Residues 10 to 36 (STFADINEVEDEAEQELQQQENNNNKR) are a coiled coil. The segment covering 25–34 (ELQQQENNNN) has biased composition (low complexity). Position 59 is a phosphoserine; by SRK2E (S59). Positions 69-79 (RESRERDDKKS) are enriched in basic and acidic residues. Residues S86, S113, and S120 each carry the phosphoserine; by SRK2E modification. Gly residues predominate over residues 86–99 (SFGGFESGGIINGG). At S146 the chain carries Phosphoserine. The helical transmembrane segment at 190-210 (IGCFGICLGLSSQAVLWLALA) threads the bilayer. At 211-216 (KSPATN) the chain is on the extracellular side. A helical membrane pass occupies residues 217-237 (FLHITPLINLVVWLFSLVVLV). At 238–265 (SVSFTYILKCIFYFEAVKREYFHPVRVN) the chain is on the cytoplasmic side. Residues 266 to 286 (FFFAPWVVCMFLAISVPPMFS) traverse the membrane as a helical segment. At 287-295 (PNRKYLHPA) the chain is on the extracellular side. Residues 296–316 (IWCVFMGPYFFLELKIYGQWL) form a helical membrane-spanning segment. At 317–325 (SGGKRRLCK) the chain is on the cytoplasmic side. Residues 326–346 (VANPSSHLSVVGNFVGAILAS) form a helical membrane-spanning segment. The Extracellular portion of the chain corresponds to 347 to 352 (KVGWDE). Residues 353–373 (VAKFLWAVGFAHYLVVFVTLY) form a helical membrane-spanning segment. Residues 374-388 (QRLPTSEALPKELHP) are Cytoplasmic-facing. A helical transmembrane segment spans residues 389 to 409 (VYSMFIAAPSAASIAWNTIYG). The Extracellular segment spans residues 410-418 (QFDGCSRTC). Residues 419 to 439 (FFIALFLYISLVARINFFTGF) form a helical membrane-spanning segment. Residue K440 is a topological domain, cytoplasmic. A helical membrane pass occupies residues 441–463 (FSVAWWSYTFPMTTASVATIKYA). The Extracellular portion of the chain corresponds to 464–479 (EAVPGYPSRALALTLS). Residues 480-500 (FISTAMVCVLFVSTLLHAFVW) form a helical membrane-spanning segment. Residues 501–556 (QTLFPNDLAIAITKRKLTREKKPFKRAYDLKRWTKQALAKKISAEKDFEAEEESHH) are Cytoplasmic-facing.

This sequence belongs to the SLAC1 S-type anion channel family. As to quaternary structure, homotrimer. Interacts with SRK2E, CPK6, CPK21, CPK23 and PP2CA. The channel is inactivated upon PP2CA and ABI1 binding. Interacts with KAT1, KAT2, KAT3/KC1 and AKT2. Interacts with GHR1. In terms of processing, phosphorylation by SRK2E, especially on Ser-120, activates the channel. Also phosphorylated and activated by CPK21 and CPK23. Abscisic acid (ABA) promotes phosphorylation. This phosphorylation is inhibited by ABI1. Phosphorylated and activated by GHR1; this phosphorylation is repressed by ABI2 but not ABI1. Phosphorylated by HT1 on N-terminus but not C-terminus. As to expression, preferentially expressed in guard cells. Also detected in the vascular strands close to the leaf margins.

Its subcellular location is the cell membrane. Activated by GHR1-mediated phosphorylation which is negatively regulated by ABI2 but not ABI1. Activation by SRK2E/OST1 and GHR1 is repressed by HT1. In terms of biological role, slow, weak voltage-dependent S-type anion efflux channel involved in maintenance of anion homeostasis. Cl(-) efflux through SLAC1 causes membrane depolarization, which activates outward-rectifying K1 channels, leading to KCl and water efflux to reduce turgor further and cause stomatal closure, that reduces water loss and promotes leaf turgor. Essential for stomatal closure in response to CO(2), abscisic acid (ABA), ozone O(3), light/dark transitions, humidity change, calcium ions, hydrogen peroxide H(2)O(2), reactive oxygen species (ROS), and nitric oxide. Binds to the highly selective inward-rectifying potassium channels KAT1 and AKT2, and inhibits their activities. Functions as an essential negative regulator of inward potassium channels in guard cells. Essential for the efficient stomatal closure and opening in guard cells. Involved in the local and/or systemic stomatal responses (e.g. stomatal closure) to light stress. This Arabidopsis thaliana (Mouse-ear cress) protein is Guard cell S-type anion channel SLAC1.